The sequence spans 247 residues: tRNA pseudouridine synthase A (247 aa).

Catalysis depends on Asp-53, which acts as the Nucleophile. Residue Tyr-111 coordinates substrate.

Belongs to the tRNA pseudouridine synthase TruA family. As to quaternary structure, homodimer.

It carries out the reaction uridine(38/39/40) in tRNA = pseudouridine(38/39/40) in tRNA. In terms of biological role, formation of pseudouridine at positions 38, 39 and 40 in the anticodon stem and loop of transfer RNAs. The polypeptide is tRNA pseudouridine synthase A (Bacillus licheniformis (strain ATCC 14580 / DSM 13 / JCM 2505 / CCUG 7422 / NBRC 12200 / NCIMB 9375 / NCTC 10341 / NRRL NRS-1264 / Gibson 46)).